The sequence spans 185 residues: Ribosome-recycling factor (185 aa).

The tract at residues 137 to 162 is disordered; that stretch reads DSIDKMVKDGEVGEDEGRRAEKELDD.

This sequence belongs to the RRF family.

It localises to the cytoplasm. In terms of biological role, responsible for the release of ribosomes from messenger RNA at the termination of protein biosynthesis. May increase the efficiency of translation by recycling ribosomes from one round of translation to another. This is Ribosome-recycling factor from Streptomyces coelicolor (strain ATCC BAA-471 / A3(2) / M145).